We begin with the raw amino-acid sequence, 775 residues long: Kinesin-like protein KIF3B (775 aa).

One can recognise a Kinesin motor domain in the interval 9-341; the sequence is SVKVVVRCRP…LRYANRAKNI (333 aa). ATP is bound at residue 97 to 104; sequence GQTGTGKT. A disordered region spans residues 372–419; sequence KRSGRKRRRRRRRRVGEGGEEFEDGEDEEDDDDDDEDEEEGVDADKNI. A compositionally biased stretch (basic residues) spans 374-385; the sequence is SGRKRRRRRRRR. A compositionally biased stretch (acidic residues) spans 389 to 413; sequence GGEEFEDGEDEEDDDDDDEDEEEGV. A coiled-coil region spans residues 501 to 591; the sequence is LELKRQEIAE…QNELTRELKL (91 aa). The segment at 716-775 is disordered; the sequence is FHASLGSSPGLSASAAGFSKKPKSGRPKTGKKVSTPTSAHSPLSGSGSPLYPQSRGLVPK. Over residues 718-734 the composition is skewed to low complexity; sequence ASLGSSPGLSASAAGFS. The span at 735–746 shows a compositional bias: basic residues; sequence KKPKSGRPKTGK. Residues 756-765 are compositionally biased toward low complexity; it reads SPLSGSGSPL.

The protein belongs to the TRAFAC class myosin-kinesin ATPase superfamily. Kinesin family. As to quaternary structure, heterodimer of KIF3A and KIF3B. KIF3A/KIF3B heterodimer interacts with KIFAP3 forming a heterotrimeric (KIF3A/KIF3B/KIFAP3) complex.

It is found in the cytoplasm. It localises to the cytoskeleton. The protein resides in the cell projection. The protein localises to the cilium. Its subcellular location is the dendritic spine. Functionally, microtubule-based molecular motor that transport intracellular cargos, such as vesicles, organelles and protein complexes. Uses ATP hydrolysis to generate force to bind and move along the microtubule. Plays a role in cilia formation. Required for photoreceptor development. In Danio rerio (Zebrafish), this protein is Kinesin-like protein KIF3B.